Here is a 110-residue protein sequence, read N- to C-terminus: Class I hydrophobin 2 (110 aa).

A signal peptide spans 1–19 (MFARAASVFVLSLPILATA). 4 disulfide bridges follow: C29/C89, C36/C83, C37/C70, and C90/C103.

It belongs to the fungal hydrophobin family. As to quaternary structure, self-assembles to form functional amyloid fibrils called rodlets. Self-assembly into fibrillar rodlets occurs spontaneously at hydrophobic:hydrophilic interfaces and the rodlets further associate laterally to form amphipathic monolayers.

The protein resides in the secreted. It localises to the cell wall. Aerial growth, conidiation, and dispersal of filamentous fungi in the environment rely upon a capability of their secreting small amphipathic proteins called hydrophobins (HPBs) with low sequence identity. Class I can self-assemble into an outermost layer of rodlet bundles on aerial cell surfaces, conferring cellular hydrophobicity that supports fungal growth, development and dispersal; whereas Class II form highly ordered films at water-air interfaces through intermolecular interactions but contribute nothing to the rodlet structure. Pnh2 is a class I hydrophobin that might be involved in the attachment of the hydrophilic wall of hyphae to the hydrophobic surface of wood under inorganic phosphate (Pi)-deficient conditions and enable the mycelium to degrade efficiently the components of wood and to acquire nutrients containing Pi. This Pholiota nameko protein is Class I hydrophobin 2.